A 432-amino-acid chain; its full sequence is Homogentisate 1,2-dioxygenase (432 aa).

Fe cation is bound by residues His-333, Glu-339, and His-369.

The protein belongs to the homogentisate dioxygenase family. Requires Fe cation as cofactor.

The catalysed reaction is homogentisate + O2 = 4-maleylacetoacetate + H(+). It functions in the pathway amino-acid degradation; L-phenylalanine degradation; acetoacetate and fumarate from L-phenylalanine: step 4/6. In Dictyostelium discoideum (Social amoeba), this protein is Homogentisate 1,2-dioxygenase (hgd).